The chain runs to 606 residues: Maternal effect protein oskar (606 aa).

The region spanning 152–221 (EYPDIDSEVR…SGKRIFNLKA (70 aa)) is the HTH OST-type domain. Ser-270 and Ser-275 each carry phosphoserine. A leucine-zipper region spans residues 425 to 439 (LMGDDFMLYLARMEL).

Interacts with smaug (smg). As to quaternary structure, interacts with yl/yolkless. In terms of tissue distribution, begins to accumulate at the posterior pole of the oocyte from stage 8 onwards.

It is found in the endosome. Functionally, organizes the germ plasm and directs localization of the posterior determinant nanos. Oskar protein is required to keep nanos (nos) RNA and staufen protein at the posterior pole. This chain is Maternal effect protein oskar (osk), found in Drosophila melanogaster (Fruit fly).